Reading from the N-terminus, the 928-residue chain is Receptor-like kinase TMK4 (928 aa).

The first 24 residues, 1 to 24 (MEAPTPLLLLVLLTTITFFTTSVA), serve as a signal peptide directing secretion. The Extracellular portion of the chain corresponds to 25-472 (DDQTAMLALA…GGSSGGGGSK (448 aa)). A disulfide bridge connects residues cysteine 51 and cysteine 58. LRR repeat units lie at residues 61-84 (GRVT…ISTL), 85-107 (SELK…FAKL), 108-130 (SSLQ…AFAG), 132-157 (TSLQ…LVDS), 158-180 (TSLT…IFDS), 181-205 (LASL…LGKS), 207-229 (IQNL…LSSM), 230-251 (TSLS…DLSK), 252-276 (SENL…LLTL), and 278-298 (SLKN…LFSP). The N-linked (GlcNAc...) asparagine glycan is linked to asparagine 144. Residue asparagine 193 is glycosylated (N-linked (GlcNAc...) asparagine). N-linked (GlcNAc...) asparagine glycosylation occurs at asparagine 281. 2 disulfide bridges follow: cysteine 310-cysteine 318 and cysteine 348-cysteine 356. 3 LRR repeats span residues 360–383 (GKNV…AIAN), 384–407 (LTSL…ELTF), and 408–435 (MTSL…VKFS). A glycan (N-linked (GlcNAc...) asparagine) is linked at asparagine 383. A disordered region spans residues 445-465 (TNGGDGSSPGTGGASGGPGGS). The helical transmembrane segment at 473–493 (VGVIVGVIVAVLVFLAILGFV) threads the bilayer. The Cytoplasmic segment spans residues 494–928 (VYKFVMKRKY…PNTFDSADGR (435 aa)). Residues 578–858 (FSEDNILGRG…HAVNVLGPLV (281 aa)) enclose the Protein kinase domain. ATP is bound by residues 584–592 (LGRGGFGVV) and lysine 606. The Proton acceptor role is filled by aspartate 707. Polar residues-rich tracts occupy residues 898-911 (FHGD…QSSI) and 918-928 (FPNTFDSADGR). The segment at 898-928 (FHGDFSYSQTQSSIPPKASGFPNTFDSADGR) is disordered.

This sequence belongs to the protein kinase superfamily. Ser/Thr protein kinase family. As to quaternary structure, interacts with BAK1 (via kinase domain), SERK4 and SERK5. Expressed in roots, leaves, stems, siliques and flowers. Ubiquitous, with a high expression in mature pollen grains and in the pericycle and the xylem vasculature of the primary and lateral roots.

The protein localises to the membrane. The catalysed reaction is L-seryl-[protein] + ATP = O-phospho-L-seryl-[protein] + ADP + H(+). The enzyme catalyses L-threonyl-[protein] + ATP = O-phospho-L-threonyl-[protein] + ADP + H(+). In terms of biological role, involved in auxin signal transduction and cell expansion and proliferation regulation. May be involved in brassinosteroid-mediated plant growth and development via auxin regulation. May be involved in microspore and pollen development. This chain is Receptor-like kinase TMK4, found in Arabidopsis thaliana (Mouse-ear cress).